Consider the following 87-residue polypeptide: Small ribosomal subunit protein bS20 (87 aa).

The interval 1–26 is disordered; that stretch reads MANIKSAQKRAVQSEKRRQHNASQRS.

Belongs to the bacterial ribosomal protein bS20 family.

Functionally, binds directly to 16S ribosomal RNA. This is Small ribosomal subunit protein bS20 from Glaesserella parasuis serovar 5 (strain SH0165) (Haemophilus parasuis).